A 303-amino-acid polypeptide reads, in one-letter code: NAD kinase (303 aa).

Residue aspartate 71 is the Proton acceptor of the active site. Residues aspartate 71 to glycine 72, asparagine 145 to aspartate 146, arginine 156, arginine 173, aspartate 175, threonine 186 to serine 191, and glutamine 245 contribute to the NAD(+) site.

Belongs to the NAD kinase family. It depends on a divalent metal cation as a cofactor.

The protein localises to the cytoplasm. The enzyme catalyses NAD(+) + ATP = ADP + NADP(+) + H(+). Involved in the regulation of the intracellular balance of NAD and NADP, and is a key enzyme in the biosynthesis of NADP. Catalyzes specifically the phosphorylation on 2'-hydroxyl of the adenosine moiety of NAD to yield NADP. The sequence is that of NAD kinase from Magnetococcus marinus (strain ATCC BAA-1437 / JCM 17883 / MC-1).